We begin with the raw amino-acid sequence, 426 residues long: Transcription termination factor Rho (426 aa).

Residues 58–131 (QSLARGYLDI…VRVEAVNGLD (74 aa)) form the Rho RNA-BD domain. ATP contacts are provided by residues 176-181 (GRGQRA), 188-193 (KAGKTT), and R219.

It belongs to the Rho family. In terms of assembly, homohexamer. The homohexamer assembles into an open ring structure.

Functionally, facilitates transcription termination by a mechanism that involves Rho binding to the nascent RNA, activation of Rho's RNA-dependent ATPase activity, and release of the mRNA from the DNA template. In Deinococcus radiodurans (strain ATCC 13939 / DSM 20539 / JCM 16871 / CCUG 27074 / LMG 4051 / NBRC 15346 / NCIMB 9279 / VKM B-1422 / R1), this protein is Transcription termination factor Rho.